A 620-amino-acid polypeptide reads, in one-letter code: MSFDTAKYPTLALVDSTAELRLLPKESLPKLCDELRRYLLDSVSRSSGHFASGLGTVELTVALHYVYNTPFDQLIWDVGHQAYPHKILTGRRDRIGTIRQKGGLHPFPWRGESEYDVLSVGHSSTSISAGIGIAVAAAREEKNRRTVCVIGDGAITAGMAFEAMNHAGDIRPDMLVILNDNEMSISENVGALNNHLAQLLSGKLYSTLREGGKRVFSNVPPIKELLKRTEEHIKGMVVPGTLFEELGFNYIGPVDGHDVLGLVNTLKNMRDLKGPQFLHIMTKKGRGYEPAEKDPITFHAVPKFDPESGTLPKSSGGQPSYSKIFGDWLCETAAKDDKLMAITPAMREGSGMVEFSRKYPAQYFDVAIAEQHAVTFAAGLAIGGYKPVVAIYSTFLQRAYDQVIHDVAIQKLPVLFAIDRAGIVGADGQTHQGAFDLSYLRCIPDMVIMTPSDENECRQMLFTGYHYNDGPSAVRYPRGNALGVTLEPLQKLPIGKGVVKRHGEKVALLNFGTLLPEATQAAEALNATLVDMRFVKPLDEALIMELAGRHEALVTIEENAVMGGAGSGVNEVLMAKRKPVPVLNIGLPDHFIPQGTQDEARAEIGLTASGIEQRVRDWLA.

Thiamine diphosphate-binding positions include histidine 80 and 121-123 (GHS). Aspartate 152 is a Mg(2+) binding site. Thiamine diphosphate-binding positions include 153-154 (GA), asparagine 181, tyrosine 288, and glutamate 370. Asparagine 181 is a binding site for Mg(2+).

It belongs to the transketolase family. DXPS subfamily. In terms of assembly, homodimer. Mg(2+) serves as cofactor. Thiamine diphosphate is required as a cofactor.

The catalysed reaction is D-glyceraldehyde 3-phosphate + pyruvate + H(+) = 1-deoxy-D-xylulose 5-phosphate + CO2. It participates in metabolic intermediate biosynthesis; 1-deoxy-D-xylulose 5-phosphate biosynthesis; 1-deoxy-D-xylulose 5-phosphate from D-glyceraldehyde 3-phosphate and pyruvate: step 1/1. Catalyzes the acyloin condensation reaction between C atoms 2 and 3 of pyruvate and glyceraldehyde 3-phosphate to yield 1-deoxy-D-xylulose-5-phosphate (DXP). This chain is 1-deoxy-D-xylulose-5-phosphate synthase, found in Cronobacter sakazakii (strain ATCC BAA-894) (Enterobacter sakazakii).